We begin with the raw amino-acid sequence, 332 residues long: Glycerol-3-phosphate dehydrogenase [NAD(P)+] (332 aa).

Positions 15, 16, and 110 each coordinate NADPH. Sn-glycerol 3-phosphate contacts are provided by lysine 110, glycine 137, and serine 139. An NADPH-binding site is contributed by alanine 141. Sn-glycerol 3-phosphate-binding residues include lysine 192, aspartate 245, serine 255, arginine 256, and asparagine 257. Lysine 192 acts as the Proton acceptor in catalysis. Residue arginine 256 coordinates NADPH. Glutamate 282 lines the NADPH pocket.

This sequence belongs to the NAD-dependent glycerol-3-phosphate dehydrogenase family.

It is found in the cytoplasm. It carries out the reaction sn-glycerol 3-phosphate + NAD(+) = dihydroxyacetone phosphate + NADH + H(+). It catalyses the reaction sn-glycerol 3-phosphate + NADP(+) = dihydroxyacetone phosphate + NADPH + H(+). The protein operates within membrane lipid metabolism; glycerophospholipid metabolism. Functionally, catalyzes the reduction of the glycolytic intermediate dihydroxyacetone phosphate (DHAP) to sn-glycerol 3-phosphate (G3P), the key precursor for phospholipid synthesis. The protein is Glycerol-3-phosphate dehydrogenase [NAD(P)+] of Coxiella burnetii (strain CbuK_Q154) (Coxiella burnetii (strain Q154)).